The chain runs to 62 residues: Large ribosomal subunit protein uL30 (62 aa).

Belongs to the universal ribosomal protein uL30 family. Part of the 50S ribosomal subunit.

The sequence is that of Large ribosomal subunit protein uL30 from Shouchella clausii (strain KSM-K16) (Alkalihalobacillus clausii).